A 215-amino-acid chain; its full sequence is Protein-L-isoaspartate O-methyltransferase (215 aa).

The active site involves serine 62.

It belongs to the methyltransferase superfamily. L-isoaspartyl/D-aspartyl protein methyltransferase family.

It localises to the cytoplasm. The catalysed reaction is [protein]-L-isoaspartate + S-adenosyl-L-methionine = [protein]-L-isoaspartate alpha-methyl ester + S-adenosyl-L-homocysteine. Catalyzes the methyl esterification of L-isoaspartyl residues in peptides and proteins that result from spontaneous decomposition of normal L-aspartyl and L-asparaginyl residues. It plays a role in the repair and/or degradation of damaged proteins. The chain is Protein-L-isoaspartate O-methyltransferase from Rhodopseudomonas palustris (strain BisA53).